The sequence spans 394 residues: Probable purine permease 8 (394 aa).

A run of 10 helical transmembrane segments spans residues 45–65, 77–97, 113–133, 139–159, 172–192, 208–228, 247–267, 289–309, 315–335, and 344–364; these read WLRISIYVFFVLACQALSTIL, TWMGTLVQLIGFPVLFLFRFF, FSSFTILGSVYIVTGLLVSAN, VGLLYLPVSTFSLILASQLAF, FTPFIVNSLFLLTISSALLVV, VIGIICTIGASAGIGLLLSLV, LVAYQSLVASCVVLIGLFASG, TLASIAISWQVYTIGVVGLIF, FSNSITAVGLPIVPVVAVIVF, and IFSIILAIWGFISFVYQHYLD. Residues 373–394 are disordered; sequence TSPVGDPHLLPAEEGHTNIHSV. Over residues 383-394 the composition is skewed to basic and acidic residues; sequence PAEEGHTNIHSV.

This sequence belongs to the purine permeases (TC 2.A.7.14) family.

The protein resides in the membrane. This chain is Probable purine permease 8 (PUP8), found in Arabidopsis thaliana (Mouse-ear cress).